The following is a 387-amino-acid chain: ATP phosphoribosyltransferase regulatory subunit (387 aa).

Belongs to the class-II aminoacyl-tRNA synthetase family. HisZ subfamily. In terms of assembly, heteromultimer composed of HisG and HisZ subunits.

The protein resides in the cytoplasm. The protein operates within amino-acid biosynthesis; L-histidine biosynthesis; L-histidine from 5-phospho-alpha-D-ribose 1-diphosphate: step 1/9. Functionally, required for the first step of histidine biosynthesis. May allow the feedback regulation of ATP phosphoribosyltransferase activity by histidine. In Polynucleobacter asymbioticus (strain DSM 18221 / CIP 109841 / QLW-P1DMWA-1) (Polynucleobacter necessarius subsp. asymbioticus), this protein is ATP phosphoribosyltransferase regulatory subunit.